The sequence spans 429 residues: Enolase (429 aa).

A (2R)-2-phosphoglycerate-binding site is contributed by Gln167. The active-site Proton donor is Glu209. The Mg(2+) site is built by Asp246, Glu289, and Asp316. Lys341, Arg370, Ser371, and Lys392 together coordinate (2R)-2-phosphoglycerate. Catalysis depends on Lys341, which acts as the Proton acceptor.

Belongs to the enolase family. In terms of assembly, component of the RNA degradosome, a multiprotein complex involved in RNA processing and mRNA degradation. Mg(2+) serves as cofactor.

Its subcellular location is the cytoplasm. The protein localises to the secreted. It is found in the cell surface. It carries out the reaction (2R)-2-phosphoglycerate = phosphoenolpyruvate + H2O. It participates in carbohydrate degradation; glycolysis; pyruvate from D-glyceraldehyde 3-phosphate: step 4/5. In terms of biological role, catalyzes the reversible conversion of 2-phosphoglycerate (2-PG) into phosphoenolpyruvate (PEP). It is essential for the degradation of carbohydrates via glycolysis. This Pseudomonas putida (strain ATCC 47054 / DSM 6125 / CFBP 8728 / NCIMB 11950 / KT2440) protein is Enolase.